We begin with the raw amino-acid sequence, 139 residues long: Nucleoside diphosphate kinase (139 aa).

Positions 11, 59, 87, 93, 104, and 114 each coordinate ATP. The active-site Pros-phosphohistidine intermediate is His-117.

It belongs to the NDK family. In terms of assembly, homotetramer. Mg(2+) serves as cofactor.

It is found in the cytoplasm. The catalysed reaction is a 2'-deoxyribonucleoside 5'-diphosphate + ATP = a 2'-deoxyribonucleoside 5'-triphosphate + ADP. It carries out the reaction a ribonucleoside 5'-diphosphate + ATP = a ribonucleoside 5'-triphosphate + ADP. Major role in the synthesis of nucleoside triphosphates other than ATP. The ATP gamma phosphate is transferred to the NDP beta phosphate via a ping-pong mechanism, using a phosphorylated active-site intermediate. This Flavobacterium johnsoniae (strain ATCC 17061 / DSM 2064 / JCM 8514 / BCRC 14874 / CCUG 350202 / NBRC 14942 / NCIMB 11054 / UW101) (Cytophaga johnsonae) protein is Nucleoside diphosphate kinase.